The chain runs to 2128 residues: Spectrin beta chain, erythrocytic (2128 aa).

Positions 1-15 (MTSATEFENVGNQPP) are enriched in polar residues. A disordered region spans residues 1 to 30 (MTSATEFENVGNQPPFSRINARWDAPDDEL). Residues 2-275 (TSATEFENVG…IITYVVAFYH (274 aa)) are actin-binding. Ser36 carries the phosphoserine modification. Calponin-homology (CH) domains follow at residues 54–158 (VVQK…LRFQ) and 173–278 (RSAK…HYFS). A Phosphothreonine modification is found at Thr104. Spectrin repeat units follow at residues 303-411 (MIEK…LALR), 416-517 (RQEF…QRLE), 521-627 (ALQK…QLEQ), 630-733 (RLWK…DLQD), 736-838 (NFFQ…KLQE), 845-942 (VFGE…REAV), 950-1050 (NYCV…LSLG), 1054-1157 (KLQA…NTLT), 1162-1250 (FQEF…RHKK), 1267-1368 (ELQN…EQLS), 1381-1455 (ADLN…FLDL), 1473-1574 (LQIS…RLRD), 1576-1680 (HEAQ…RLEN), 1682-1784 (YHLF…MQLL), 1789-1890 (DLHR…RAQL), 1897-1997 (FRFF…DRLH), and 2004-2064 (QFSR…KPTT). Residue Ser1289 is modified to Phosphoserine. Ser2034 is subject to Phosphoserine. Residues 2062–2108 (PTTLELKERQTPERPTEEPGPQEEEGETAGEAPQVHHAATERTSPVS) form a disordered region. A phosphothreonine mark is found at Thr2064, Thr2072, and Thr2101. Residues 2066–2078 (ELKERQTPERPTE) show a composition bias toward basic and acidic residues. Residues Ser2105, Ser2108, Ser2114, Ser2116, and Ser2119 each carry the phosphoserine modification.

The protein belongs to the spectrin family. Composed of nonhomologous chains, alpha and beta, which aggregate to form dimers, tetramers, and higher polymers. Interacts with BCAM.

It localises to the cytoplasm. The protein localises to the cytoskeleton. It is found in the cell cortex. Its function is as follows. Spectrin is the major constituent of the cytoskeletal network underlying the erythrocyte plasma membrane. It associates with band 4.1 and actin to form the cytoskeletal superstructure of the erythrocyte plasma membrane. This Mus musculus (Mouse) protein is Spectrin beta chain, erythrocytic (Sptb).